The primary structure comprises 220 residues: NADH-quinone oxidoreductase subunit I (220 aa).

2 4Fe-4S ferredoxin-type domains span residues 71–102 (LQRLLDSGSERCIGCGLCEKICTSNCIRIITH) and 112–141 (DSYTINLGRCIYCGLCAEVCPELAIVMGNR). 8 residues coordinate [4Fe-4S] cluster: cysteine 82, cysteine 85, cysteine 88, cysteine 92, cysteine 121, cysteine 124, cysteine 127, and cysteine 131. Residues 187 to 220 (MQATPLDYVQEPSKEESQEETPTNPESNKGDENV) form a disordered region.

The protein belongs to the complex I 23 kDa subunit family. In terms of assembly, NDH-1 is composed of 14 different subunits. Subunits NuoA, H, J, K, L, M, N constitute the membrane sector of the complex. [4Fe-4S] cluster is required as a cofactor.

The protein localises to the cell inner membrane. It catalyses the reaction a quinone + NADH + 5 H(+)(in) = a quinol + NAD(+) + 4 H(+)(out). Its function is as follows. NDH-1 shuttles electrons from NADH, via FMN and iron-sulfur (Fe-S) centers, to quinones in the respiratory chain. The immediate electron acceptor for the enzyme in this species is believed to be ubiquinone. Couples the redox reaction to proton translocation (for every two electrons transferred, four hydrogen ions are translocated across the cytoplasmic membrane), and thus conserves the redox energy in a proton gradient. The polypeptide is NADH-quinone oxidoreductase subunit I (Helicobacter pylori (strain ATCC 700392 / 26695) (Campylobacter pylori)).